The chain runs to 67 residues: Small ribosomal subunit protein bS21 (67 aa).

It belongs to the bacterial ribosomal protein bS21 family.

The protein is Small ribosomal subunit protein bS21 of Magnetococcus marinus (strain ATCC BAA-1437 / JCM 17883 / MC-1).